Here is a 161-residue protein sequence, read N- to C-terminus: Transcription initiation factor TFIID subunit 12 (161 aa).

Residues 15-55 (FSSIKPEPASTPPQGSMANSTAVVKIPGTPGAGGRLSPENN) form a disordered region. Lys-19 participates in a covalent cross-link: Glycyl lysine isopeptide (Lys-Gly) (interchain with G-Cter in SUMO2). The segment covering 26 to 36 (PPQGSMANSTA) has biased composition (polar residues). Thr-43 carries the post-translational modification Phosphothreonine. Residue Ser-51 is modified to Phosphoserine. At Thr-59 the chain carries Phosphothreonine. The 68-residue stretch at 59–126 (TKKKLQDLVR…QLHLERQWNM (68 aa)) folds into the Histone-fold domain.

This sequence belongs to the TAF12 family. As to quaternary structure, component of the TFIID basal transcription factor complex, composed of TATA-box-binding protein TBP, and a number of TBP-associated factors (TAFs), including TAF1, TAF2, TAF3, TAF4, TAF5, TAF6, TAF7, TAF8, TAF9, TAF10, TAF11, TAF12 and TAF13. Component of the TATA-binding protein-free TAF complex (TFTC), the PCAF histone acetylase complex and the STAGA transcription coactivator-HAT complex. Component of the PCAF complex, at least composed of TADA2L/ADA2, TADA3L/ADA3, TAF5L/PAF65-beta, SUPT3H, TAF6L, TAF9, TAF10, TAF12 and TRRAP. Component of the STAGA transcription coactivator-HAT complex, at least composed of SUPT3H, GCN5L2, TAF5L, TAF6L, STAF65-gamma/SUPT7L, TADA3L, TAD1L, TAF10, TAF12, TRRAP and TAF9. Interacts with ATF7 (via the transactivation domain); the interaction is prevented by sumoylation of ATF7. In terms of assembly, interacts with TBP; the interaction is direct. Interacts with TAF10; the interaction is direct. Interacts with ATF7, promoting transactivation by ATF7. Does not promote the transactivation of ATF7. As to expression, ubiquitous.

It localises to the nucleus. Its function is as follows. The TFIID basal transcription factor complex plays a major role in the initiation of RNA polymerase II (Pol II)-dependent transcription. TFIID recognizes and binds promoters with or without a TATA box via its subunit TBP, a TATA-box-binding protein, and promotes assembly of the pre-initiation complex (PIC). The TFIID complex consists of TBP and TBP-associated factors (TAFs), including TAF1, TAF2, TAF3, TAF4, TAF5, TAF6, TAF7, TAF8, TAF9, TAF10, TAF11, TAF12 and TAF13. Component of the TATA-binding protein-free TAF complex (TFTC), the PCAF histone acetylase complex and the STAGA transcription coactivator-HAT complex. This is Transcription initiation factor TFIID subunit 12 from Homo sapiens (Human).